A 122-amino-acid chain; its full sequence is Large ribosomal subunit protein uL14c (122 aa).

It belongs to the universal ribosomal protein uL14 family. Part of the 50S ribosomal subunit.

It localises to the plastid. It is found in the chloroplast. Binds to 23S rRNA. This Welwitschia mirabilis (Tree tumbo) protein is Large ribosomal subunit protein uL14c.